A 74-amino-acid polypeptide reads, in one-letter code: MSNPCQKEACAIQGYCLLSHQYDDAKCAKVIDQLYICCSKFYKDNGKDSRSPCCPLPSLLELKMKQRKLTPGDS.

In terms of domain architecture, CHCH spans 2–45 (SNPCQKEACAIQGYCLLSHQYDDAKCAKVIDQLYICCSKFYKDN). Positions 5–16 (CQKEACAIQGYC) match the Cx10C motif motif. 2 disulfides stabilise this stretch: Cys-5–Cys-37 and Cys-16–Cys-27. A Cx9C motif motif is present at residues 27-37 (CAKVIDQLYIC).

This sequence belongs to the CMC4 family.

It is found in the mitochondrion intermembrane space. In Saccharomyces cerevisiae (strain JAY291) (Baker's yeast), this protein is Cx9C motif-containing protein 4, mitochondrial (CMC4).